We begin with the raw amino-acid sequence, 100 residues long: Putative pterin-4-alpha-carbinolamine dehydratase (100 aa).

The protein belongs to the pterin-4-alpha-carbinolamine dehydratase family.

It catalyses the reaction (4aS,6R)-4a-hydroxy-L-erythro-5,6,7,8-tetrahydrobiopterin = (6R)-L-erythro-6,7-dihydrobiopterin + H2O. The chain is Putative pterin-4-alpha-carbinolamine dehydratase from Afipia carboxidovorans (strain ATCC 49405 / DSM 1227 / KCTC 32145 / OM5) (Oligotropha carboxidovorans).